A 323-amino-acid chain; its full sequence is NAC transcription factor 25 (323 aa).

One can recognise an NAC domain in the interval 16–177 (LPPGFRFHPT…DWVLCRIYKK (162 aa)). Residues 114–183 (VGVKKALVFY…IYKKNSSQRP (70 aa)) mediate DNA binding. Residues 201 to 221 (KSSANSSSTSVLDNNDNNNNN) show a composition bias toward low complexity. A disordered region spans residues 201 to 223 (KSSANSSSTSVLDNNDNNNNNNE).

In terms of tissue distribution, expressed specifically in the tapetum.

The protein localises to the nucleus. Functionally, transcription factor of the NAC family. May be associated with anther development and pollen production. Required for normal seed development and morphology. This is NAC transcription factor 25 (NAC025) from Arabidopsis thaliana (Mouse-ear cress).